A 365-amino-acid chain; its full sequence is Probable 7-methylxanthine methyltransferase 3 (365 aa).

S-adenosyl-L-homocysteine is bound at residue tyrosine 18. Residue threonine 25 participates in theobromine binding. S-adenosyl-L-homocysteine contacts are provided by cysteine 62, glutamine 67, aspartate 99, leucine 100, serine 132, and phenylalanine 133. 3 residues coordinate theobromine: tyrosine 150, histidine 153, and tryptophan 154. Positions 170, 258, and 259 each coordinate Mg(2+). Phenylalanine 311 is a theobromine binding site.

This sequence belongs to the methyltransferase superfamily. Type-7 methyltransferase family. Mg(2+) is required as a cofactor.

The enzyme catalyses 7-methylxanthine + S-adenosyl-L-methionine = theobromine + S-adenosyl-L-homocysteine + H(+). The protein operates within alkaloid biosynthesis. Involved in the biosynthesis of theobromine. In Theobroma cacao (Cacao), this protein is Probable 7-methylxanthine methyltransferase 3.